Consider the following 158-residue polypeptide: Siroheme decarboxylase beta subunit (158 aa).

The protein belongs to the Ahb/Nir family. Forms a heterodimer composed of AhbA and AhbB.

It catalyses the reaction siroheme + 2 H(+) = 12,18-didecarboxysiroheme + 2 CO2. The protein operates within porphyrin-containing compound metabolism; protoheme biosynthesis. In terms of biological role, involved in siroheme-dependent heme b biosynthesis. Catalyzes the decarboxylation of siroheme into didecarboxysiroheme. This Oleidesulfovibrio alaskensis (strain ATCC BAA-1058 / DSM 17464 / G20) (Desulfovibrio alaskensis) protein is Siroheme decarboxylase beta subunit.